A 929-amino-acid chain; its full sequence is ATP-dependent DNA helicase PIF1 (929 aa).

Residues 1-52 (MLRRLLQPAYNVALSGTSASTLPRKSASVGLVRTALMPVDYNAGALFCAMRF) constitute a mitochondrion transit peptide. Residues 55–89 (GTEKERKREPKRGSKRRSKATTTLSTPTDAQTSVT) are disordered. Basic and acidic residues predominate over residues 56–66 (TEKERKREPKR). The segment covering 74 to 89 (ATTTLSTPTDAQTSVT) has biased composition (polar residues). 302-309 (GSAGTGKT) contributes to the ATP binding site. A DNA-binding region spans residues 776–796 (HLLYVAMSRVRNPEQLSMSSF). Residues 902–929 (HERRQKKMAVEGAKQTDTTKASSGESLE) form a disordered region. Over residues 916–929 (QTDTTKASSGESLE) the composition is skewed to polar residues.

The protein belongs to the helicase family. PIF1 subfamily. Monomer. The cofactor is Mg(2+).

It localises to the mitochondrion. It catalyses the reaction Couples ATP hydrolysis with the unwinding of duplex DNA at the replication fork by translocating in the 5'-3' direction. This creates two antiparallel DNA single strands (ssDNA). The leading ssDNA polymer is the template for DNA polymerase III holoenzyme which synthesizes a continuous strand.. The catalysed reaction is ATP + H2O = ADP + phosphate + H(+). In terms of biological role, DNA-dependent ATPase and probable 5'-3' DNA helicase required for the maintenance of mitochondrial (kinetoplast) genome stability. Essential for replication of kinetoplast minicircles. Involved in the segregation of minicircle progeny. The protein is ATP-dependent DNA helicase PIF1 of Trypanosoma brucei brucei (strain 927/4 GUTat10.1).